The following is a 252-amino-acid chain: dITP/XTP pyrophosphatase (252 aa).

7–12 (THNEGK) contributes to the substrate binding site. Catalysis depends on Asp-74, which acts as the Proton acceptor. Asp-74 lines the Mg(2+) pocket. Substrate-binding positions include Ser-75 and 193–196 (FGYD). A disordered region spans residues 202–229 (DDQPAGRVSTEPDHEGEPLTSAEMTPAE). Substrate contacts are provided by residues Lys-230 and 235–236 (HR).

Belongs to the HAM1 NTPase family. In terms of assembly, homodimer. Mg(2+) is required as a cofactor.

It catalyses the reaction XTP + H2O = XMP + diphosphate + H(+). The catalysed reaction is dITP + H2O = dIMP + diphosphate + H(+). It carries out the reaction ITP + H2O = IMP + diphosphate + H(+). In terms of biological role, pyrophosphatase that catalyzes the hydrolysis of nucleoside triphosphates to their monophosphate derivatives, with a high preference for the non-canonical purine nucleotides XTP (xanthosine triphosphate), dITP (deoxyinosine triphosphate) and ITP. Seems to function as a house-cleaning enzyme that removes non-canonical purine nucleotides from the nucleotide pool, thus preventing their incorporation into DNA/RNA and avoiding chromosomal lesions. The sequence is that of dITP/XTP pyrophosphatase from Bifidobacterium longum (strain DJO10A).